Here is a 378-residue protein sequence, read N- to C-terminus: Protein RecA (378 aa).

The disordered stretch occupies residues 1–20 (MAAKKDKSVPDSKITDKEGK). 80 to 87 (GAESSGKT) contributes to the ATP binding site. Residues 344-378 (GPVDKKKKKSKKEASSDDTDDENLEIDDAIDENND) form a disordered region. The segment covering 359–378 (SDDTDDENLEIDDAIDENND) has biased composition (acidic residues).

Belongs to the RecA family.

The protein resides in the cytoplasm. Can catalyze the hydrolysis of ATP in the presence of single-stranded DNA, the ATP-dependent uptake of single-stranded DNA by duplex DNA, and the ATP-dependent hybridization of homologous single-stranded DNAs. It interacts with LexA causing its activation and leading to its autocatalytic cleavage. The polypeptide is Protein RecA (Fusobacterium nucleatum subsp. nucleatum (strain ATCC 25586 / DSM 15643 / BCRC 10681 / CIP 101130 / JCM 8532 / KCTC 2640 / LMG 13131 / VPI 4355)).